Here is a 225-residue protein sequence, read N- to C-terminus: Protein GrpE (225 aa).

Polar residues predominate over residues 1-15 (MSGDASTPEQDQNVV). 2 disordered regions span residues 1-48 (MSGD…DRMQ) and 198-225 (VSMG…AEEA). The segment covering 201 to 225 (GPGPSDPGSAPAEAAAAPDQTAEEA) has biased composition (low complexity).

This sequence belongs to the GrpE family. As to quaternary structure, homodimer.

The protein resides in the cytoplasm. Functionally, participates actively in the response to hyperosmotic and heat shock by preventing the aggregation of stress-denatured proteins, in association with DnaK and GrpE. It is the nucleotide exchange factor for DnaK and may function as a thermosensor. Unfolded proteins bind initially to DnaJ; upon interaction with the DnaJ-bound protein, DnaK hydrolyzes its bound ATP, resulting in the formation of a stable complex. GrpE releases ADP from DnaK; ATP binding to DnaK triggers the release of the substrate protein, thus completing the reaction cycle. Several rounds of ATP-dependent interactions between DnaJ, DnaK and GrpE are required for fully efficient folding. In Synechococcus sp. (strain CC9605), this protein is Protein GrpE.